Consider the following 406-residue polypeptide: MASNDKGLEEIPEGQIESNYDEITDSFDAMDLKPELLRGVYAYGFERPSAIQQRAILPIIKGNDVIAQAQSGTGKTATFSISALQKLDPNVKGCQALILAPTRELAQQIQKVVVAIGDFMNIECHACIGGTNVREDMKALQEGPQVVVGTPGRVQDMIQRRVLRTDNLKMFILDEADEMLSRGFTEQIYDIFQLLPQSTQVVLLSATMPQDVLEVTTKFMRDPVRILVKKQELTLEGIKQFYIAVEKEEWKLDTLSDLYETVTITQAVIFCNTRRKVDWLTDKLTARDFTVSAMHGDMEQAQRDVIMKEFRSGSSRVLIATDLLARGIDVQQVSLVINYDLPANRENYIHRIGRGGRFGRKGVAINFVTADDVRMMREIEQFYSTQIEEMPMNVAGKFNHVDISLD.

The short motif at 25-53 is the Q motif element; that stretch reads DSFDAMDLKPELLRGVYAYGFERPSAIQQ. The region spanning 56-226 is the Helicase ATP-binding domain; it reads ILPIIKGNDV…TKFMRDPVRI (171 aa). Residue 69–76 participates in ATP binding; the sequence is AQSGTGKT. Residues 174 to 177 carry the DEAD box motif; the sequence is DEAD. A Helicase C-terminal domain is found at 237-398; sequence GIKQFYIAVE…EMPMNVAGKF (162 aa).

This sequence belongs to the DEAD box helicase family. eIF4A subfamily. As to quaternary structure, component of the eIF4F complex, which composition varies with external and internal environmental conditions. It is composed of at least eIF4A, eIF4E and eIF4G.

The protein resides in the cytoplasm. It carries out the reaction ATP + H2O = ADP + phosphate + H(+). Functionally, ATP-dependent RNA helicase which is a subunit of the eIF4F complex involved in cap recognition and is required for mRNA binding to ribosome. In the current model of translation initiation, eIF4A unwinds RNA secondary structures in the 5'-UTR of mRNAs which is necessary to allow efficient binding of the small ribosomal subunit, and subsequent scanning for the initiator codon. The sequence is that of ATP-dependent RNA helicase eIF4A (tif1) from Aspergillus fumigatus (strain ATCC MYA-4609 / CBS 101355 / FGSC A1100 / Af293) (Neosartorya fumigata).